The following is a 408-amino-acid chain: Peptidase T (408 aa).

Histidine 78 is a Zn(2+) binding site. Aspartate 80 is a catalytic residue. Residue aspartate 141 coordinates Zn(2+). The active-site Proton acceptor is the glutamate 175. Zn(2+)-binding residues include glutamate 176, aspartate 198, and histidine 380.

It belongs to the peptidase M20B family. Requires Zn(2+) as cofactor.

The protein localises to the cytoplasm. It catalyses the reaction Release of the N-terminal residue from a tripeptide.. Functionally, cleaves the N-terminal amino acid of tripeptides. In Clostridium botulinum (strain 657 / Type Ba4), this protein is Peptidase T.